The following is a 150-amino-acid chain: Globin-3 (150 aa).

The Globin domain maps to 11-150 (PLTAADKTKI…IICILLNSAY (140 aa)). His-74 and His-106 together coordinate heme b.

The protein belongs to the globin family. As to quaternary structure, monomer.

The protein is Globin-3 of Mordacia mordax (Southern hemisphere lamprey).